Reading from the N-terminus, the 555-residue chain is Protein NRT1/ PTR FAMILY 5.12 (555 aa).

2 helical membrane passes run 53–73 and 83–103; these read FAYF…LGES and LWLG…DSFL. T108 bears the Phosphothreonine mark. Transmembrane regions (helical) follow at residues 109–129, 148–168, 190–210, 221–241, 315–335, 357–377, 401–421, 443–463, 482–502, and 526–546; these read ILLT…SATI, VIIF…FKVC, SYFN…RLVT, LGYA…LLGI, AVLS…VFAQ, VPAA…IPIY, ISTG…VEMK, VCWL…TMVG, ALYL…VSVI, and YFYW…VYFA.

This sequence belongs to the major facilitator superfamily. Proton-dependent oligopeptide transporter (POT/PTR) (TC 2.A.17) family. As to expression, expressed in shoots and roots.

The protein localises to the membrane. This is Protein NRT1/ PTR FAMILY 5.12 (NPF5.12) from Arabidopsis thaliana (Mouse-ear cress).